The following is a 564-amino-acid chain: Protein glycosylation K (564 aa).

Residues 1–15 (MLKKLFFILSKEDKN) lie on the Cytoplasmic side of the membrane. The helical transmembrane segment at 16 to 38 (FLFFLLVFSVFISFIETFAISLV) threads the bilayer. The region spanning 17–319 (LFFLLVFSVF…IITSYHDLLY (303 aa)) is the ABC transmembrane type-1 domain. Over 39–76 (MPFITLASDFSYFDRNKYLISLKEYLNIPVFEIIVYFG) the chain is Extracellular. The important for stimulation of ATPase activity by lipid-linked oligosaccharides and subsequent translocation of lipid-linked oligosaccharides stretch occupies residues 46–67 (SDFSYFDRNKYLISLKEYLNIP). The helical transmembrane segment at 77–98 (VGLIVFYVFRALLNAYYFHLLA) threads the bilayer. The Cytoplasmic portion of the chain corresponds to 99-149 (RFSKGRYHAIAYKVFSKFLNINYEKFTQKNQSEILKSITGEVYNLSTMISS). Residues 150 to 170 (FLLLMSEIFVVLLLYALMLLI) traverse the membrane as a helical segment. Over 171–173 (NYK) the chain is Extracellular. The helical transmembrane segment at 174-197 (ITLFLSIFMVLNAFILVKILSPII) threads the bilayer. Residues 198-254 (KKAGVRREEAMKNFFEILNTNLNNFKFIKLKTKEDGVLSLFKAQSEAFSKANITNES) are Cytoplasmic-facing. The helical transmembrane segment at 255–276 (VAAVPRIYLEGIGFCVLVFIVV) threads the bilayer. The Extracellular segment spans residues 277 to 292 (FLVLKNESDISGILST). A helical membrane pass occupies residues 293–314 (ISIFVLALYRLMPSANRIITSY). Residues 315–564 (HDLLYYHSSL…LEHGKLKEEK (250 aa)) are Cytoplasmic-facing. The ABC transporter domain occupies 349 to 564 (LKICNLSFGY…LEHGKLKEEK (216 aa)). 382 to 389 (GESGCGKS) serves as a coordination point for ATP.

The protein belongs to the ABC transporter superfamily. In terms of assembly, homodimer; domain-swapped. Helices that arise in transmembrane regions 4 and 5 from one subunit cross over and contact the nucleotide-binding domain from the other subunit.

It is found in the cell inner membrane. The enzyme catalyses ATP + H2O + lipopolysaccharideSide 1 = ADP + phosphate + lipopolysaccharideSide 2.. It participates in protein modification; protein glycosylation. In terms of biological role, mediates the ATP-dependent translocation of the undecaprenylpyrophosphate-linked heptasaccharide intermediate across the cell membrane; this is an essential step during the N-linked protein glycosylation pathway. Transport across the membrane is effected via ATP-driven conformation changes. Most likely, only the polar and charged part of the glycolipid enter the substrate-binding cavity, and the lipid tail remains exposed to the membrane lipids during the transmembrane flipping process. The sequence is that of Protein glycosylation K (pglK) from Campylobacter jejuni subsp. jejuni serotype O:2 (strain ATCC 700819 / NCTC 11168).